We begin with the raw amino-acid sequence, 107 residues long: uncharacterized protein (107 aa).

A signal peptide spans 1–18 (MRTLMLIILSILIYLSSA).

This is an uncharacterized protein from Caenorhabditis elegans.